The primary structure comprises 869 residues: Probable beta-glucosidase F (869 aa).

An N-terminal signal peptide occupies residues 1 to 19; it reads MRVLSAIALVASLASSALS. N-linked (GlcNAc...) asparagine glycans are attached at residues N77 and N261. Residue D289 is part of the active site. N332, N364, N399, and N478 each carry an N-linked (GlcNAc...) asparagine glycan. The disordered stretch occupies residues 677–697; it reads STYPPTRPPKGPTPTYPTAIP. Pro residues predominate over residues 681–691; that stretch reads PTRPPKGPTPT. N728 carries an N-linked (GlcNAc...) asparagine glycan.

This sequence belongs to the glycosyl hydrolase 3 family.

It localises to the secreted. It catalyses the reaction Hydrolysis of terminal, non-reducing beta-D-glucosyl residues with release of beta-D-glucose.. It participates in glycan metabolism; cellulose degradation. Its function is as follows. Beta-glucosidases are one of a number of cellulolytic enzymes involved in the degradation of cellulosic biomass. Catalyzes the last step releasing glucose from the inhibitory cellobiose. This Aspergillus fumigatus (strain CBS 144.89 / FGSC A1163 / CEA10) (Neosartorya fumigata) protein is Probable beta-glucosidase F (bglF).